The primary structure comprises 123 residues: Immunoglobulin lambda variable 5-45 (123 aa).

Residues 1 to 19 (MAWTPLLLLFLSHCTGSLS) form the signal peptide. Residues 20 to 44 (QAVLTQPSSLSASPGASASLTCTLC) are framework-1. The region spanning 20 to 123 (QAVLTQPSSL…YCMIWHSSAS (104 aa)) is the Ig-like domain. Cysteine 41 and cysteine 115 are disulfide-bonded. The complementarity-determining-1 stretch occupies residues 45 to 53 (SGINVGTYR). A framework-2 region spans residues 54 to 70 (IYWYQQKPGSPPQYLLR). Positions 68-92 (LLRYKSDSDKQQGSGVPSRFSGSKD) are disordered. Residues 71–77 (YKSDSDK) are complementarity-determining-2. Residues 78-92 (QQGSGVPSRFSGSKD) are compositionally biased toward polar residues. The interval 78–115 (QQGSGVPSRFSGSKDASANAGILLISGLQSEDEADYYC) is framework-3. Residues 116–123 (MIWHSSAS) are complementarity-determining-3.

In terms of assembly, immunoglobulins are composed of two identical heavy chains and two identical light chains; disulfide-linked.

The protein localises to the secreted. Its subcellular location is the cell membrane. V region of the variable domain of immunoglobulin light chains that participates in the antigen recognition. Immunoglobulins, also known as antibodies, are membrane-bound or secreted glycoproteins produced by B lymphocytes. In the recognition phase of humoral immunity, the membrane-bound immunoglobulins serve as receptors which, upon binding of a specific antigen, trigger the clonal expansion and differentiation of B lymphocytes into immunoglobulins-secreting plasma cells. Secreted immunoglobulins mediate the effector phase of humoral immunity, which results in the elimination of bound antigens. The antigen binding site is formed by the variable domain of one heavy chain, together with that of its associated light chain. Thus, each immunoglobulin has two antigen binding sites with remarkable affinity for a particular antigen. The variable domains are assembled by a process called V-(D)-J rearrangement and can then be subjected to somatic hypermutations which, after exposure to antigen and selection, allow affinity maturation for a particular antigen. This Homo sapiens (Human) protein is Immunoglobulin lambda variable 5-45.